We begin with the raw amino-acid sequence, 370 residues long: Translocating chain-associated membrane protein 2 (370 aa).

The Cytoplasmic portion of the chain corresponds to 1 to 22 (MAFRRRTKSYPLFSQEFVIHNH). A helical transmembrane segment spans residues 23–43 (ADIGFCLVLCVLIGLMFEVTA). Residues 44–75 (KTAFLFILPQYNISVPTADSETVHYHYGPKDL) lie on the Extracellular side of the membrane. N55 carries N-linked (GlcNAc...) asparagine glycosylation. The helical transmembrane segment at 76 to 96 (VTILFYIFITIILHAVVQEYI) threads the bilayer. Over 97-119 (LDKISKRLHLSKVKHSKFNESGQ) the chain is Cytoplasmic. The TLC domain occupies 112–321 (SKFNESGQLV…HSQLRHWREY (210 aa)). Residues 120-140 (LVVFHFTSVIWCFYVVVTEGY) form a helical membrane-spanning segment. Topologically, residues 141-159 (LTNPRSLWEDYPHVHLPFQ) are extracellular. Residues 160–180 (VKFFYLCQLAYWLHALPELYF) traverse the membrane as a helical segment. Over 181–191 (QKVRKEEIPRQ) the chain is Cytoplasmic. Residues 192–209 (LQYICLYLVHIAGAYLLN) form a helical membrane-spanning segment. Residues 210–214 (LSRLG) lie on the Extracellular side of the membrane. Residues 215 to 235 (LILLLLQYSTEFLFHTARLFY) form a helical membrane-spanning segment. The Cytoplasmic portion of the chain corresponds to 236–250 (FADENNEKLFSAWAA). The chain crosses the membrane as a helical span at residues 251 to 271 (VFGVTRLFILTLAVLAIGFGL). The Extracellular segment spans residues 272-287 (ARMENQAFDPEKGNFN). A helical transmembrane segment spans residues 288–308 (TLFCRLCVLLLVCAAQAWLMW). At 309–370 (RFIHSQLRHW…SPRTKKLKSP (62 aa)) the chain is on the cytoplasmic side. The interval 348–370 (YHENGVVKAENGTSPRTKKLKSP) is disordered.

Belongs to the TRAM family. As to quaternary structure, interacts with SERCA2B and COL1A1.

Its subcellular location is the membrane. Functionally, necessary for collagen type I synthesis. May couple the activity of the ER Ca(2+) pump SERCA2B with the activity of the translocon. This coupling may increase the local Ca(2+) concentration at the site of collagen synthesis, and a high Ca(2+) concentration may be necessary for the function of molecular chaperones involved in collagen folding. Required for proper insertion of the first transmembrane helix N-terminus of TM4SF20 into the ER lumen, may act as a ceramide sensor for regulated alternative translocation (RAT). This chain is Translocating chain-associated membrane protein 2 (TRAM2), found in Homo sapiens (Human).